The sequence spans 232 residues: Small ribosomal subunit protein uS3 (232 aa).

A KH type-2 domain is found at 39 to 107; it reads IRAILHKELK…DVVINIVEIR (69 aa).

The protein belongs to the universal ribosomal protein uS3 family. Part of the 30S ribosomal subunit. Forms a tight complex with proteins S10 and S14.

Functionally, binds the lower part of the 30S subunit head. Binds mRNA in the 70S ribosome, positioning it for translation. In Rhodopseudomonas palustris (strain BisA53), this protein is Small ribosomal subunit protein uS3.